Here is a 377-residue protein sequence, read N- to C-terminus: Histidine protein methyltransferase 1 (377 aa).

Belongs to the methyltransferase superfamily. METTL18 family.

The protein resides in the cytoplasm. It is found in the nucleus. It catalyses the reaction L-histidyl-[protein] + S-adenosyl-L-methionine = N(tele)-methyl-L-histidyl-[protein] + S-adenosyl-L-homocysteine + H(+). Functionally, protein-histidine N-methyltransferase that mediates methylation of RPL3 at 'His-243'. Methylates ribosome-associated RPL3, but not free RPL3, thereby regulating 60S subunit assembly. In addition to RPL3, mediates His methylation of other proteins. The chain is Histidine protein methyltransferase 1 from Saccharomyces cerevisiae (strain ATCC 204508 / S288c) (Baker's yeast).